Here is a 178-residue protein sequence, read N- to C-terminus: Peptide deformylase (178 aa).

C102 and H144 together coordinate Fe cation. The active site involves E145. Position 148 (H148) interacts with Fe cation.

The protein belongs to the polypeptide deformylase family. The cofactor is Fe(2+).

It catalyses the reaction N-terminal N-formyl-L-methionyl-[peptide] + H2O = N-terminal L-methionyl-[peptide] + formate. Functionally, removes the formyl group from the N-terminal Met of newly synthesized proteins. Requires at least a dipeptide for an efficient rate of reaction. N-terminal L-methionine is a prerequisite for activity but the enzyme has broad specificity at other positions. This chain is Peptide deformylase, found in Leptospira borgpetersenii serovar Hardjo-bovis (strain JB197).